A 212-amino-acid polypeptide reads, in one-letter code: Urease accessory protein UreG (212 aa).

GTP is bound at residue 15–22; sequence GPVGSGKT.

The protein belongs to the SIMIBI class G3E GTPase family. UreG subfamily. As to quaternary structure, homodimer. UreD, UreF and UreG form a complex that acts as a GTP-hydrolysis-dependent molecular chaperone, activating the urease apoprotein by helping to assemble the nickel containing metallocenter of UreC. The UreE protein probably delivers the nickel.

The protein resides in the cytoplasm. Facilitates the functional incorporation of the urease nickel metallocenter. This process requires GTP hydrolysis, probably effectuated by UreG. The polypeptide is Urease accessory protein UreG (Opitutus terrae (strain DSM 11246 / JCM 15787 / PB90-1)).